A 319-amino-acid chain; its full sequence is MamJ paralog LimJ (319 aa).

Disordered stretches follow at residues 1–59 (MMME…PAPV) and 145–176 (AAAP…TETE). Over residues 30-52 (AALAPAADAEIPASSAPEPAAPI) the composition is skewed to low complexity. Positions 150–164 (PEPEPVPEPEPEPEP) are enriched in acidic residues.

The protein belongs to the magnetosome MamJ protein family.

It is found in the magnetosome. Its function is as follows. Regulates the dynamic behavior of MamK filaments; paralog MamJ also promotes MamK turnover. At least one other protein besides MamJ and LimJ is required for MamK turnover. Might connect magnetosomes to MamK filaments. The sequence is that of MamJ paralog LimJ from Paramagnetospirillum magneticum (strain ATCC 700264 / AMB-1) (Magnetospirillum magneticum).